The sequence spans 311 residues: 4-diphosphocytidyl-2-C-methyl-D-erythritol kinase (311 aa).

The active site involves K16. ATP is bound at residue P100 to S110. The active site involves D142.

Belongs to the GHMP kinase family. IspE subfamily.

It carries out the reaction 4-CDP-2-C-methyl-D-erythritol + ATP = 4-CDP-2-C-methyl-D-erythritol 2-phosphate + ADP + H(+). It participates in isoprenoid biosynthesis; isopentenyl diphosphate biosynthesis via DXP pathway; isopentenyl diphosphate from 1-deoxy-D-xylulose 5-phosphate: step 3/6. Functionally, catalyzes the phosphorylation of the position 2 hydroxy group of 4-diphosphocytidyl-2C-methyl-D-erythritol. This Prochlorococcus marinus (strain MIT 9215) protein is 4-diphosphocytidyl-2-C-methyl-D-erythritol kinase.